A 358-amino-acid polypeptide reads, in one-letter code: 3-isopropylmalate dehydrogenase (358 aa).

77–90 (GPKWTNLPPDQQPE) is an NAD(+) binding site. Arginine 98, arginine 108, arginine 137, and aspartate 226 together coordinate substrate. Mg(2+)-binding residues include aspartate 226, aspartate 250, and aspartate 254. Residue 284–296 (GSAPDIAGKGIAN) participates in NAD(+) binding.

Belongs to the isocitrate and isopropylmalate dehydrogenases family. LeuB type 1 subfamily. As to quaternary structure, homodimer. Requires Mg(2+) as cofactor. Mn(2+) serves as cofactor.

It localises to the cytoplasm. It carries out the reaction (2R,3S)-3-isopropylmalate + NAD(+) = 4-methyl-2-oxopentanoate + CO2 + NADH. It participates in amino-acid biosynthesis; L-leucine biosynthesis; L-leucine from 3-methyl-2-oxobutanoate: step 3/4. In terms of biological role, catalyzes the oxidation of 3-carboxy-2-hydroxy-4-methylpentanoate (3-isopropylmalate) to 3-carboxy-4-methyl-2-oxopentanoate. The product decarboxylates to 4-methyl-2 oxopentanoate. In Haemophilus influenzae (strain 86-028NP), this protein is 3-isopropylmalate dehydrogenase.